The sequence spans 303 residues: MILEDTDLPLSHEQPSYSQIKDVLDKIPTGEHLWDLPKYEEKIILNWLIKLLATNLEWITVEEERDYLVSTICERIAERSGRLAAPTRKREFSLSNGVSVVLREPTMTYNTLGFKTWGSAPLLSANLPKWEDLSNSINALELGAGTGLVGISAAIQLGWQVVCTDLPDIVENMQYNVDYNSELIQQYAGSVSCHVLDWMNPPDDDNRPSWLIKPFQRIIASDCIYETHFGELAIALFRKYLAKDGIVITEYPLRETHLEEIGVFEKGMDAAGFERQMGEEIGEEDFGSLYPVTCRWSRWKYHG.

S-adenosyl-L-methionine is bound by residues W117, 143–145, D165, W198, and S221; that span reads GAG.

It belongs to the class I-like SAM-binding methyltransferase superfamily. METTL21 family.

It localises to the cytoplasm. It is found in the nucleus. In terms of biological role, S-adenosyl-L-methionine-dependent protein-lysine N-methyltransferase that methylates elongation factor 2 and elongation factor 3A. This chain is Protein-lysine N-methyltransferase rrg1, found in Schizosaccharomyces pombe (strain 972 / ATCC 24843) (Fission yeast).